Consider the following 260-residue polypeptide: Hydroxyacylglutathione hydrolase (260 aa).

Zn(2+) is bound by residues histidine 61, histidine 63, aspartate 65, histidine 66, histidine 119, aspartate 138, and histidine 176.

Belongs to the metallo-beta-lactamase superfamily. Glyoxalase II family. In terms of assembly, monomer. It depends on Zn(2+) as a cofactor.

The enzyme catalyses an S-(2-hydroxyacyl)glutathione + H2O = a 2-hydroxy carboxylate + glutathione + H(+). It participates in secondary metabolite metabolism; methylglyoxal degradation; (R)-lactate from methylglyoxal: step 2/2. Thiolesterase that catalyzes the hydrolysis of S-D-lactoyl-glutathione to form glutathione and D-lactic acid. This is Hydroxyacylglutathione hydrolase from Brucella suis (strain ATCC 23445 / NCTC 10510).